We begin with the raw amino-acid sequence, 4885 residues long: Centrosome-associated protein CEP530 (4885 aa).

Residues 1437 to 1528 (VAEYEAETRG…GREKDQLRSE (92 aa)) adopt a coiled-coil conformation.

The protein resides in the cytoplasm. It is found in the cytoskeleton. The protein localises to the microtubule organizing center. Its subcellular location is the centrosome. In terms of biological role, required for proper nuclei segregation during the cell division. Plays a role in coordination of karyokinesis and cytokinesis during the tachyzoite cell cycle. In Toxoplasma gondii (strain ATCC 50611 / Me49), this protein is Centrosome-associated protein CEP530.